Here is a 126-residue protein sequence, read N- to C-terminus: Large ribosomal subunit protein bL17c (126 aa).

A chloroplast-targeting transit peptide spans 1 to 10; that stretch reads MIDNGGRFFA.

As to quaternary structure, component of the chloroplast large ribosomal subunit (LSU). Mature 70S chloroplast ribosomes of higher plants consist of a small (30S) and a large (50S) subunit. The 30S small subunit contains 1 molecule of ribosomal RNA (16S rRNA) and 24 different proteins. The 50S large subunit contains 3 rRNA molecules (23S, 5S and 4.5S rRNA) and 33 different proteins.

It localises to the plastid. The protein resides in the chloroplast. Functionally, component of the chloroplast ribosome (chloro-ribosome), a dedicated translation machinery responsible for the synthesis of chloroplast genome-encoded proteins, including proteins of the transcription and translation machinery and components of the photosynthetic apparatus. The sequence is that of Large ribosomal subunit protein bL17c (RPL17) from Spinacia oleracea (Spinach).